The primary structure comprises 56 residues: Large ribosomal subunit protein eL24 (56 aa).

Cys-6, Cys-9, Cys-32, and Cys-36 together coordinate Zn(2+). A C4-type zinc finger spans residues 6–36 (CSFCNTRITPGTGKLYAKKDGTVYYFCSSKC).

This sequence belongs to the eukaryotic ribosomal protein eL24 family. In terms of assembly, part of the 50S ribosomal subunit. Forms a cluster with proteins L3 and L14. Zn(2+) is required as a cofactor.

Binds to the 23S rRNA. This is Large ribosomal subunit protein eL24 from Methanothrix thermoacetophila (strain DSM 6194 / JCM 14653 / NBRC 101360 / PT) (Methanosaeta thermophila).